The primary structure comprises 168 residues: Cell division inhibitor SulA (168 aa).

The ftsZ binding stretch occupies residues 105-111 (ALQTGNY).

This sequence belongs to the SulA family. As to quaternary structure, interacts with FtsZ. Post-translationally, is rapidly cleaved and degraded by the Lon protease once DNA damage is repaired.

In terms of biological role, component of the SOS system and an inhibitor of cell division. Accumulation of SulA causes rapid cessation of cell division and the appearance of long, non-septate filaments. In the presence of GTP, binds a polymerization-competent form of FtsZ in a 1:1 ratio, thus inhibiting FtsZ polymerization and therefore preventing it from participating in the assembly of the Z ring. This mechanism prevents the premature segregation of damaged DNA to daughter cells during cell division. In Erwinia pyrifoliae (strain DSM 12163 / CIP 106111 / Ep16/96), this protein is Cell division inhibitor SulA.